We begin with the raw amino-acid sequence, 696 residues long: Gametogenetin-binding protein 2 (696 aa).

Serine 360 and serine 602 each carry phosphoserine.

In terms of assembly, interacts with isoform 1 of GGN. In terms of tissue distribution, testis-specific.

Its subcellular location is the cytoplasmic vesicle. Functionally, may be involved in spermatogenesis. This Mus musculus (Mouse) protein is Gametogenetin-binding protein 2 (Ggnbp2).